Reading from the N-terminus, the 394-residue chain is S-adenosylmethionine synthase (394 aa).

Glu10 is a Mg(2+) binding site. His16 lines the ATP pocket. Glu44 contributes to the K(+) binding site. L-methionine contacts are provided by Glu57 and Gln100. ATP is bound by residues 168-170 (DGK), 236-239 (SGRF), Asp247, 253-254 (RK), Ala270, Lys274, and Lys278. Residue Asp247 participates in L-methionine binding. L-methionine is bound at residue Lys278.

Belongs to the AdoMet synthase family. In terms of assembly, homotetramer. Mn(2+) serves as cofactor. Requires Mg(2+) as cofactor. It depends on Co(2+) as a cofactor. The cofactor is K(+).

It is found in the cytoplasm. It carries out the reaction L-methionine + ATP + H2O = S-adenosyl-L-methionine + phosphate + diphosphate. The protein operates within amino-acid biosynthesis; S-adenosyl-L-methionine biosynthesis; S-adenosyl-L-methionine from L-methionine: step 1/1. Its function is as follows. Catalyzes the formation of S-adenosylmethionine from methionine and ATP. The reaction comprises two steps that are both catalyzed by the same enzyme: formation of S-adenosylmethionine (AdoMet) and triphosphate, and subsequent hydrolysis of the triphosphate. In Medicago truncatula (Barrel medic), this protein is S-adenosylmethionine synthase (METK).